Here is a 482-residue protein sequence, read N- to C-terminus: GTPase Obg (482 aa).

The Obg domain occupies 2-159 (PRFVDRVVIH…VDLTLELKTV (158 aa)). In terms of domain architecture, OBG-type G spans 160–340 (ADVGLVGFPS…LTFALWEMIV (181 aa)). GTP contacts are provided by residues 166-173 (GFPSAGKS), 191-195 (FTTLV), 212-215 (DVPG), 292-295 (NKVD), and 321-323 (STL). Positions 173 and 193 each coordinate Mg(2+). An OCT domain is found at 358–438 (PIPVDESGFT…IGDMTFDWEP (81 aa)). The interval 441-482 (PAGVDVTMSGRGTDARIDKTDRVGAAERRQARRVRRGQVEPE) is disordered. Basic and acidic residues predominate over residues 453-469 (TDARIDKTDRVGAAERR).

It belongs to the TRAFAC class OBG-HflX-like GTPase superfamily. OBG GTPase family. Monomer. Mg(2+) is required as a cofactor.

The protein resides in the cytoplasm. In terms of biological role, an essential GTPase which binds GTP, GDP and possibly (p)ppGpp with moderate affinity, with high nucleotide exchange rates and a fairly low GTP hydrolysis rate. Plays a role in control of the cell cycle, stress response, ribosome biogenesis and in those bacteria that undergo differentiation, in morphogenesis control. The chain is GTPase Obg from Mycobacteroides abscessus (strain ATCC 19977 / DSM 44196 / CCUG 20993 / CIP 104536 / JCM 13569 / NCTC 13031 / TMC 1543 / L948) (Mycobacterium abscessus).